The chain runs to 208 residues: MRKIRTKICGITTPEDALYAAHAGADALGLVFYPQSPRAVDIIKAQKITAALPPFVSVVALFVNESAQNIRRILAEVPIHIIQFHGDEDDAFCRQFHRPYIKAIRVQTASDIRNAADRFPDAQALLFDAYHPSEYGGTGHRFDWTLLAEYSGKPWVLAGGLTPENVDEAIRITGAEAVDVSGGVEASKGKKDPAKVAAFIATANRLSR.

The protein belongs to the TrpF family.

The enzyme catalyses N-(5-phospho-beta-D-ribosyl)anthranilate = 1-(2-carboxyphenylamino)-1-deoxy-D-ribulose 5-phosphate. It functions in the pathway amino-acid biosynthesis; L-tryptophan biosynthesis; L-tryptophan from chorismate: step 3/5. The chain is N-(5'-phosphoribosyl)anthranilate isomerase from Neisseria meningitidis serogroup A / serotype 4A (strain DSM 15465 / Z2491).